Here is a 101-residue protein sequence, read N- to C-terminus: Small ribosomal subunit protein uS14 (101 aa).

The protein belongs to the universal ribosomal protein uS14 family. Part of the 30S ribosomal subunit. Contacts proteins S3 and S10.

Binds 16S rRNA, required for the assembly of 30S particles and may also be responsible for determining the conformation of the 16S rRNA at the A site. The polypeptide is Small ribosomal subunit protein uS14 (Aeromonas hydrophila subsp. hydrophila (strain ATCC 7966 / DSM 30187 / BCRC 13018 / CCUG 14551 / JCM 1027 / KCTC 2358 / NCIMB 9240 / NCTC 8049)).